Reading from the N-terminus, the 167-residue chain is Ribosome maturation factor RimM (167 aa).

Residues 94-165 (EHEYYYSDII…TIKITPMEGL (72 aa)) form the PRC barrel domain.

It belongs to the RimM family. As to quaternary structure, binds ribosomal protein uS19.

It localises to the cytoplasm. In terms of biological role, an accessory protein needed during the final step in the assembly of 30S ribosomal subunit, possibly for assembly of the head region. Essential for efficient processing of 16S rRNA. May be needed both before and after RbfA during the maturation of 16S rRNA. It has affinity for free ribosomal 30S subunits but not for 70S ribosomes. This is Ribosome maturation factor RimM from Staphylococcus epidermidis (strain ATCC 35984 / DSM 28319 / BCRC 17069 / CCUG 31568 / BM 3577 / RP62A).